Reading from the N-terminus, the 515-residue chain is MGSLSSRVLRQPRPALAQQAQGARAGGSARRPDTGDDAAGHGFCYCAGSHKRKRSSGSFCYCHPDSETDEDEEEGDEQQRLLNTPRRKKLKSTSKYIYQTLFLNGENSDIKICALGEEWSLHKIYLCQSGYFSSMFSGSWKESSMNIIELEIPDQNIDVEALQVAFGSLYRDDVLIKPSRVVAILAAACLLQLDGLIQQCGETMKETVNVKTVCGYYTSAGTYGLDSVKKKCLEWLLNNLMTHQNVELFKELSINVMKQLIGSSNLFVMQVEMDIYTALKKWMFLQLVPSWNGSLKQLLTETDVWFSKQRKDFEGMAFLETEQGKPFVSVFRHLRLQYIISDLASARIIEQDAVVPSEWLSSVYKQQWFAMLRAEQDSEVGPQEINKEELEGNSMRCGRKLAKDGEYCWRWTGFNFGFDLLVTYTNRYIIFKRNTLNQPCSGSVSLQPRRSIAFRLRLASFDSSGKLICSRTTGYQILTLEKDQEQVVMNLDSRLLIFPLYICCNFLYISPEKKN.

A disordered region spans residues methionine 1 to glycine 35. Over residues glutamine 11–alanine 29 the composition is skewed to low complexity. Residues serine 49–serine 55 carry the Nuclear localization signal motif. The disordered stretch occupies residues aspartate 65–proline 85. A Phosphoserine modification is found at serine 66. Residues glutamate 67–aspartate 76 show a composition bias toward acidic residues. The residue at position 68 (threonine 68) is a Phosphothreonine. Positions proline 85–lysine 91 match the Nuclear localization signal motif. Residues serine 108–proline 178 enclose the BTB domain.

Interacts with TMPO-beta, TSG101 and TFDP2. Interacts with EMD.

It localises to the nucleus matrix. In terms of biological role, possible function in spermatogenesis. Enhances the degradation of MDM2 and increases the amount of p53 probably by modulating the nucleocytoplasmic transport. This is Germ cell-less protein-like 1 (GMCL1) from Homo sapiens (Human).